A 274-amino-acid chain; its full sequence is MLSVAARSGPFAPVLSATSRGVAGALRPLVQAAVPATSESPVLDLKRSVLCRESLRGQAAGRPLVASVSLNVPASVRYSHTDIKVPDFSDYRRPEVLDSTKSSKESSEARKGFSYLVTATTTVGVAYAAKNVVSQFVSSMSASADVLAMSKIEIKLSDIPEGKNMAFKWRGKPLFVRHRTKKEIDQEAAVEVSQLRDPQHDLERVKKPEWVILIGVCTHLGCVPIANAGDFGGYYCPCHGSHYDASGRIRKGPAPLNLEVPSYEFTSDDMVIVG.

The Mitochondrial matrix portion of the chain corresponds to 79 to 103 (SHTDIKVPDFSDYRRPEVLDSTKSS). The chain crosses the membrane as a helical span at residues 104–140 (KESSEARKGFSYLVTATTTVGVAYAAKNVVSQFVSSM). Over 141–274 (SASADVLAMS…FTSDDMVIVG (134 aa)) the chain is Mitochondrial intermembrane. In terms of domain architecture, Rieske spans 187–272 (EAAVEVSQLR…YEFTSDDMVI (86 aa)). [2Fe-2S] cluster-binding residues include C217, H219, C236, H239, and S241. Cysteines 222 and 238 form a disulfide.

It belongs to the Rieske iron-sulfur protein family. In terms of assembly, component of the ubiquinol-cytochrome c oxidoreductase (cytochrome b-c1 complex, complex III, CIII), a multisubunit enzyme composed of 11 subunits. The complex is composed of 3 respiratory subunits cytochrome b, cytochrome c1 and Rieske protein UQCRFS1, 2 core protein subunits UQCRC1/QCR1 and UQCRC2/QCR2, and 6 low-molecular weight protein subunits UQCRH/QCR6, UQCRB/QCR7, UQCRQ/QCR8, UQCR10/QCR9, UQCR11/QCR10 and subunit 9, the cleavage product of Rieske protein UQCRFS1. The complex exists as an obligatory dimer and forms supercomplexes (SCs) in the inner mitochondrial membrane with NADH-ubiquinone oxidoreductase (complex I, CI) and cytochrome c oxidase (complex IV, CIV), resulting in different assemblies (supercomplex SCI(1)III(2)IV(1) and megacomplex MCI(2)III(2)IV(2)). Incorporation of the Rieske protein UQCRFS1 is the penultimate step in complex III assembly. Interacts with TTC19, which is involved in the clearance of UQCRFS1 fragments. As to quaternary structure, component of the ubiquinol-cytochrome c oxidoreductase (cytochrome b-c1 complex, complex III, CIII). Subunit 9 corresponds to the mitochondrial targeting sequence (MTS) of Rieske protein UQCRFS1. It is retained after processing and incorporated inside complex III, where it remains bound to the complex and localizes between the 2 core subunits UQCRC1/QCR1 and UQCRC2/QCR2. Requires [2Fe-2S] cluster as cofactor. In terms of processing, proteolytic processing is necessary for the correct insertion of UQCRFS1 in the complex III dimer. Several fragments are generated during UQCRFS1 insertion, most probably due to the endogenous matrix-processing peptidase (MPP) activity of the 2 core protein subunits UQCRC1/QCR1 and UQCRC2/QCR2, which are homologous to the 2 mitochondrial-processing peptidase (MPP) subunits beta-MPP and alpha-MPP respectively. The action of the protease is also necessary for the clearance of the UQCRFS1 fragments.

It is found in the mitochondrion inner membrane. The enzyme catalyses a quinol + 2 Fe(III)-[cytochrome c](out) = a quinone + 2 Fe(II)-[cytochrome c](out) + 2 H(+)(out). In terms of biological role, component of the ubiquinol-cytochrome c oxidoreductase, a multisubunit transmembrane complex that is part of the mitochondrial electron transport chain which drives oxidative phosphorylation. The respiratory chain contains 3 multisubunit complexes succinate dehydrogenase (complex II, CII), ubiquinol-cytochrome c oxidoreductase (cytochrome b-c1 complex, complex III, CIII) and cytochrome c oxidase (complex IV, CIV), that cooperate to transfer electrons derived from NADH and succinate to molecular oxygen, creating an electrochemical gradient over the inner membrane that drives transmembrane transport and the ATP synthase. The cytochrome b-c1 complex catalyzes electron transfer from ubiquinol to cytochrome c, linking this redox reaction to translocation of protons across the mitochondrial inner membrane, with protons being carried across the membrane as hydrogens on the quinol. In the process called Q cycle, 2 protons are consumed from the matrix, 4 protons are released into the intermembrane space and 2 electrons are passed to cytochrome c. The Rieske protein is a catalytic core subunit containing a [2Fe-2S] iron-sulfur cluster. It cycles between 2 conformational states during catalysis to transfer electrons from the quinol bound in the Q(0) site in cytochrome b to cytochrome c1. Incorporation of UQCRFS1 is the penultimate step in complex III assembly. Component of the ubiquinol-cytochrome c oxidoreductase (cytochrome b-c1 complex, complex III, CIII). UQCRFS1 undergoes proteolytic processing once it is incorporated in the complex III dimer. One of the fragments, called subunit 9, corresponds to its mitochondrial targeting sequence (MTS). The proteolytic processing is necessary for the correct insertion of UQCRFS1 in the complex III dimer, but the persistence of UQCRFS1-derived fragments may prevent newly imported UQCRFS1 to be processed and assembled into complex III and is detrimental for the complex III structure and function. This Bos taurus (Bovine) protein is Cytochrome b-c1 complex subunit Rieske, mitochondrial (UQCRFS1).